The primary structure comprises 338 residues: Ferrochelatase (338 aa).

Residues His-207 and Glu-293 each contribute to the Fe cation site.

This sequence belongs to the ferrochelatase family.

The protein resides in the cytoplasm. It carries out the reaction heme b + 2 H(+) = protoporphyrin IX + Fe(2+). It participates in porphyrin-containing compound metabolism; protoheme biosynthesis; protoheme from protoporphyrin-IX: step 1/1. In terms of biological role, catalyzes the ferrous insertion into protoporphyrin IX. The protein is Ferrochelatase of Shewanella denitrificans (strain OS217 / ATCC BAA-1090 / DSM 15013).